The following is a 343-amino-acid chain: Ribosomal RNA small subunit methyltransferase C (343 aa).

The protein belongs to the methyltransferase superfamily. RsmC family. In terms of assembly, monomer.

Its subcellular location is the cytoplasm. It carries out the reaction guanosine(1207) in 16S rRNA + S-adenosyl-L-methionine = N(2)-methylguanosine(1207) in 16S rRNA + S-adenosyl-L-homocysteine + H(+). In terms of biological role, specifically methylates the guanine in position 1207 of 16S rRNA in the 30S particle. The sequence is that of Ribosomal RNA small subunit methyltransferase C from Escherichia coli O81 (strain ED1a).